We begin with the raw amino-acid sequence, 183 residues long: Ubiquitin-conjugating enzyme E2 H (183 aa).

Residues 1–150 form the UBC core domain; it reads MSSPSPGKRR…IKEYIQKYAT (150 aa). Residue Lys60 is modified to N6-acetyllysine. Cys87 (glycyl thioester intermediate) is an active-site residue. The tract at residues 152–183 is disordered; it reads EALKEQEEGTGDSSSESSMSDFSEDEAQDMEL. Over residues 163–172 the composition is skewed to low complexity; the sequence is DSSSESSMSD. Over residues 173–183 the composition is skewed to acidic residues; it reads FSEDEAQDMEL.

The protein belongs to the ubiquitin-conjugating enzyme family. As to quaternary structure, interacts with MAEA and WDR26, components of the CTLH complex that contains GID4, RANBP9 and/or RANBP10, MKLN1, MAEA, RMND5A (or alternatively its paralog RMND5B), GID8, ARMC8, WDR26 and YPEL5. In terms of processing, autoubiquitinated in vitro in the presence of NEDD4L.

The enzyme catalyses S-ubiquitinyl-[E1 ubiquitin-activating enzyme]-L-cysteine + [E2 ubiquitin-conjugating enzyme]-L-cysteine = [E1 ubiquitin-activating enzyme]-L-cysteine + S-ubiquitinyl-[E2 ubiquitin-conjugating enzyme]-L-cysteine.. It catalyses the reaction S-ubiquitinyl-[E1 ubiquitin-activating enzyme]-L-cysteine + [acceptor protein]-L-lysine = [E1 ubiquitin-activating enzyme]-L-cysteine + N(6)-monoubiquitinyl-[acceptor protein]-L-lysine.. The protein operates within protein modification; protein ubiquitination. In terms of biological role, accepts ubiquitin from the E1 complex and catalyzes its covalent attachment to other proteins. E2 ubiquitin conjugating enzyme that transfers ubiquitin to MAEA, a core component of the CTLH E3 ubiquitin-protein ligase complex. In vitro catalyzes 'Lys-11'- and 'Lys-48'-linked polyubiquitination. Capable, in vitro, to ubiquitinate histone H2A. The chain is Ubiquitin-conjugating enzyme E2 H (UBE2H) from Homo sapiens (Human).